A 98-amino-acid polypeptide reads, in one-letter code: Cell cycle protein GpsB (98 aa).

Residues 34-72 adopt a coiled-coil conformation; sequence LDMVIKDYEAFHQEIEELQQENLQLKKQLEEANKRQPAQ.

This sequence belongs to the GpsB family. In terms of assembly, forms polymers through the coiled coil domains. Interacts with PBP1, MreC and EzrA.

It localises to the cytoplasm. In terms of biological role, divisome component that associates with the complex late in its assembly, after the Z-ring is formed, and is dependent on DivIC and PBP2B for its recruitment to the divisome. Together with EzrA, is a key component of the system that regulates PBP1 localization during cell cycle progression. Its main role could be the removal of PBP1 from the cell pole after pole maturation is completed. Also contributes to the recruitment of PBP1 to the division complex. Not essential for septum formation. The sequence is that of Cell cycle protein GpsB from Bacillus licheniformis (strain ATCC 14580 / DSM 13 / JCM 2505 / CCUG 7422 / NBRC 12200 / NCIMB 9375 / NCTC 10341 / NRRL NRS-1264 / Gibson 46).